A 299-amino-acid chain; its full sequence is Inosose dehydratase (299 aa).

The protein belongs to the IolE/MocC family. It depends on glutathione as a cofactor. The cofactor is Co(2+). Requires Mn(2+) as cofactor.

The catalysed reaction is scyllo-inosose = 3D-3,5/4-trihydroxycyclohexane-1,2-dione + H2O. Its function is as follows. Catalyzes the dehydration of inosose (2-keto-myo-inositol, 2KMI or 2,4,6/3,5-pentahydroxycyclohexanone) to 3D-(3,5/4)-trihydroxycyclohexane-1,2-dione (D-2,3-diketo-4-deoxy-epi-inositol). The protein is Inosose dehydratase of Klebsiella pneumoniae subsp. pneumoniae (strain ATCC 700721 / MGH 78578).